The primary structure comprises 488 residues: Cysteine--tRNA ligase (488 aa).

A Zn(2+)-binding site is contributed by cysteine 40. A 'HIGH' region motif is present at residues 42-52; it reads MTVYDYCHIGH. 3 residues coordinate Zn(2+): cysteine 221, histidine 246, and glutamate 250. The 'KMSKS' region signature appears at 278-282; it reads KMSKS. Residue lysine 281 participates in ATP binding.

This sequence belongs to the class-I aminoacyl-tRNA synthetase family. In terms of assembly, monomer. Requires Zn(2+) as cofactor.

It localises to the cytoplasm. It carries out the reaction tRNA(Cys) + L-cysteine + ATP = L-cysteinyl-tRNA(Cys) + AMP + diphosphate. This is Cysteine--tRNA ligase from Psychrobacter cryohalolentis (strain ATCC BAA-1226 / DSM 17306 / VKM B-2378 / K5).